Consider the following 256-residue polypeptide: Enolase-phosphatase E1 (256 aa).

Mg(2+)-binding residues include aspartate 14 and glutamate 16. Substrate is bound by residues 142–143 and lysine 176; that span reads SS. A Mg(2+)-binding site is contributed by aspartate 201.

This sequence belongs to the HAD-like hydrolase superfamily. MasA/MtnC family. Monomer. The cofactor is Mg(2+).

It localises to the cytoplasm. It is found in the nucleus. It carries out the reaction 5-methylsulfanyl-2,3-dioxopentyl phosphate + H2O = 1,2-dihydroxy-5-(methylsulfanyl)pent-1-en-3-one + phosphate. Its pathway is amino-acid biosynthesis; L-methionine biosynthesis via salvage pathway; L-methionine from S-methyl-5-thio-alpha-D-ribose 1-phosphate: step 3/6. It functions in the pathway amino-acid biosynthesis; L-methionine biosynthesis via salvage pathway; L-methionine from S-methyl-5-thio-alpha-D-ribose 1-phosphate: step 4/6. Its function is as follows. Bifunctional enzyme that catalyzes the enolization of 2,3-diketo-5-methylthiopentyl-1-phosphate (DK-MTP-1-P) into the intermediate 2-hydroxy-3-keto-5-methylthiopentenyl-1-phosphate (HK-MTPenyl-1-P), which is then dephosphorylated to form the acireductone 1,2-dihydroxy-3-keto-5-methylthiopentene (DHK-MTPene). The sequence is that of Enolase-phosphatase E1 from Drosophila yakuba (Fruit fly).